The sequence spans 351 residues: Ion-translocating oxidoreductase complex subunit D (351 aa).

4 consecutive transmembrane segments (helical) span residues 18–38 (IMLL…YFFG), 42–62 (LIQV…VLHL), 87–107 (LPPL…IIIA), and 121–141 (PAMV…TSWL). An FMN phosphoryl threonine modification is found at T185. 5 consecutive transmembrane segments (helical) span residues 212 to 232 (LAGI…LLLL), 241 to 261 (IPVS…MIAP), 264 to 284 (FAPP…FFIA), 298 to 318 (LIFG…GGYP), and 320 to 340 (GVAF…HYTQ).

It belongs to the NqrB/RnfD family. As to quaternary structure, the complex is composed of six subunits: RnfA, RnfB, RnfC, RnfD, RnfE and RnfG. FMN serves as cofactor.

Its subcellular location is the cell inner membrane. Part of a membrane-bound complex that couples electron transfer with translocation of ions across the membrane. In Yersinia enterocolitica serotype O:8 / biotype 1B (strain NCTC 13174 / 8081), this protein is Ion-translocating oxidoreductase complex subunit D.